A 160-amino-acid chain; its full sequence is Small ribosomal subunit protein uS7 (160 aa).

Belongs to the universal ribosomal protein uS7 family. In terms of assembly, part of the 30S ribosomal subunit. Contacts proteins S9 and S11.

Functionally, one of the primary rRNA binding proteins, it binds directly to 16S rRNA where it nucleates assembly of the head domain of the 30S subunit. Is located at the subunit interface close to the decoding center, probably blocks exit of the E-site tRNA. The polypeptide is Small ribosomal subunit protein uS7 (Rickettsia rickettsii (strain Iowa)).